The chain runs to 917 residues: Protein translocase subunit SecA (917 aa).

Residues Q87, 105–109 (GEGKT), and D516 each bind ATP. Positions 901, 903, 912, and 913 each coordinate Zn(2+).

The protein belongs to the SecA family. In terms of assembly, monomer and homodimer. Part of the essential Sec protein translocation apparatus which comprises SecA, SecYEG and auxiliary proteins SecDF-YajC and YidC. It depends on Zn(2+) as a cofactor.

The protein localises to the cell inner membrane. It is found in the cytoplasm. It catalyses the reaction ATP + H2O + cellular proteinSide 1 = ADP + phosphate + cellular proteinSide 2.. Functionally, part of the Sec protein translocase complex. Interacts with the SecYEG preprotein conducting channel. Has a central role in coupling the hydrolysis of ATP to the transfer of proteins into and across the cell membrane, serving both as a receptor for the preprotein-SecB complex and as an ATP-driven molecular motor driving the stepwise translocation of polypeptide chains across the membrane. This chain is Protein translocase subunit SecA, found in Acidovorax sp. (strain JS42).